Consider the following 86-residue polypeptide: UPF0512 protein V (86 aa).

The protein belongs to the UPF0512 family.

The chain is UPF0512 protein V from Dictyostelium discoideum (Social amoeba).